Reading from the N-terminus, the 193-residue chain is Flagellar transcriptional regulator FlhC (193 aa).

Residues Cys138, Cys141, Cys158, and Cys161 each contribute to the Zn(2+) site.

Belongs to the FlhC family. Heterohexamer composed of two FlhC and four FlhD subunits. Each FlhC binds a FlhD dimer, forming a heterotrimer, and a hexamer assembles by dimerization of two heterotrimers. Zn(2+) serves as cofactor.

The protein resides in the cytoplasm. Functions in complex with FlhD as a master transcriptional regulator that regulates transcription of several flagellar and non-flagellar operons by binding to their promoter region. Activates expression of class 2 flagellar genes, including fliA, which is a flagellum-specific sigma factor that turns on the class 3 genes. Also regulates genes whose products function in a variety of physiological pathways. The polypeptide is Flagellar transcriptional regulator FlhC (Yersinia enterocolitica).